An 80-amino-acid polypeptide reads, in one-letter code: MKLVLAIVVILMLLSLSTGAEMSDNHASRSATALRDRLLSPKASICYGTGGRCTKDKHCCGWLCCGGPSVGCVVSVAPCK.

An N-terminal signal peptide occupies residues 1–19 (MKLVLAIVVILMLLSLSTG). The propeptide occupies 20–42 (AEMSDNHASRSATALRDRLLSPK). 4 disulfide bridges follow: Cys-46–Cys-60, Cys-53–Cys-65, Cys-59–Cys-72, and Cys-64–Cys-79.

Belongs to the conotoxin I3 superfamily. Expressed by the venom duct.

The protein resides in the secreted. This is Conotoxin Ca11.3 from Conus caracteristicus (Characteristic cone).